Here is a 419-residue protein sequence, read N- to C-terminus: Tyrosine--tRNA ligase (419 aa).

Y34 contacts L-tyrosine. The 'HIGH' region motif lies at 39–48 (PSGDSMHIGH). Y168 and Q172 together coordinate L-tyrosine. Positions 230–234 (KFGKS) match the 'KMSKS' region motif. K233 lines the ATP pocket. The 67-residue stretch at 352–418 (ANLVDWLVTL…GKKKYFLVSY (67 aa)) folds into the S4 RNA-binding domain.

Belongs to the class-I aminoacyl-tRNA synthetase family. TyrS type 1 subfamily. Homodimer.

The protein resides in the cytoplasm. It catalyses the reaction tRNA(Tyr) + L-tyrosine + ATP = L-tyrosyl-tRNA(Tyr) + AMP + diphosphate + H(+). Catalyzes the attachment of tyrosine to tRNA(Tyr) in a two-step reaction: tyrosine is first activated by ATP to form Tyr-AMP and then transferred to the acceptor end of tRNA(Tyr). The chain is Tyrosine--tRNA ligase from Listeria monocytogenes serovar 1/2a (strain ATCC BAA-679 / EGD-e).